A 687-amino-acid chain; its full sequence is MAKELFLEIGTEEIPAGFLPKAMADMEGLIRKELESARIGFGEVKTMATPRRLALVVKNVSAQQTDAEITTMGPAKKVAFNDDGTTTKAGEGFARGQGVDASALSIIATEKGEYVAVTKKEIGVATAGLLAEILPRLINNIPFKKSMRWGDQEVRFARPMHWIVALFDGTVIPFAFGNVQSGSMSRGHRFMANTSFPVRDFGHYLEECERHFVIPDPAKRKEIISREIERVAKAAGGNVLPDEGLLEQVTYLVEYPSAVHGTFSAEFLAVPKEVLITSMREHQRYFSLVDDKGKLLPGFITINNTLTEDPSVVVKGNEMVLRARLSDARFFFEEDKKVPLEKRVEALKSVLYQAKLGTSYEKMERFRTLAEGLAEQLQPPLKAKVFQAATLCKADLVTGMVGEFPEVQGIMGREYALLQGVDAEVARAIAEHYLPNQAGGELPASDTGAFVSIADKVDTICGCFSVGLIPSGSADPYALRRAALGIINIILAKGYNLPLIPLVTKAIGQLEGRLTRKKEEVLADVLDFFKGRFINLLTDRFPADVVEAVVAVSFDNLVEATAKIEALAQFKKRDDFEPLAVAFKRVCNIVKEQVTVPVDDKLFQDAAEGTLFQSFKSASSMVEEKVVQREYLAALTQIASLKGAVDDFFDKVMVMAEDEGVRNNRLALLQEIKSLFRDIADFGKLTA.

It belongs to the class-II aminoacyl-tRNA synthetase family. Tetramer of two alpha and two beta subunits.

The protein localises to the cytoplasm. It catalyses the reaction tRNA(Gly) + glycine + ATP = glycyl-tRNA(Gly) + AMP + diphosphate. This Geotalea daltonii (strain DSM 22248 / JCM 15807 / FRC-32) (Geobacter daltonii) protein is Glycine--tRNA ligase beta subunit.